A 62-amino-acid chain; its full sequence is Sperm protamine P1 (62 aa).

The tract at residues 1–62 (MARYRRHSRS…RRYSRRRRRY (62 aa)) is disordered.

The protein belongs to the protamine P1 family. In terms of tissue distribution, testis.

It localises to the nucleus. Its subcellular location is the chromosome. Its function is as follows. Protamines substitute for histones in the chromatin of sperm during the haploid phase of spermatogenesis. They compact sperm DNA into a highly condensed, stable and inactive complex. This is Sperm protamine P1 (PRM1) from Sminthopsis longicaudata (Long-tailed dunnart).